Reading from the N-terminus, the 456-residue chain is MQEPKQTRVRYLILLMLFLVTTINYADRATISIAGSSIQKDFGLDAVTLGYIFSAFGWAYVLGQIPGGWLLDRFGSKKVYAGSIFTWSLFTLLQGYIGEFGISTAVVLLFLLRFMVGLAEAPSFPGNARIVASWFPTKERGTASAIFNSAQYFATRAVRALDGLDRLHLRLAARVHRHGRPGHCVLAHLVDGDLRAERSPAGYAAEVRSSPHGGLVDLEDSKDKKDGGPKWDYIRQLLTNRMMMGIYLGQFCINALTYFFLTWFPVYLVQERGMTILKAGIIASLPAICGFLGGVLGGVISDTLLRRGNSLSVARKTPIVCGMVLSMSMIICNYVDADWMVVCFMALAFFGKAIGALGWAVVSDTSPKQIAGLSGGLFNTFGNLSSISTPIIIGYIIAATGVSKWRWSSWVPTHSFAAISYLFIVGEINRIELKGVTDEPATTAHPGELLPTTRKV.

10 helical membrane passes run 11 to 31, 51 to 71, 78 to 96, 102 to 119, 246 to 266, 280 to 300, 317 to 337, 341 to 361, 381 to 401, and 408 to 428; these read YLIL…RATI, YIFS…GWLL, KVYA…LQGY, ISTA…VGLA, IYLG…WFPV, GIIA…GGVI, TPIV…YVDA, VVCF…GWAV, FGNL…AATG, and SSWV…VGEI.

This sequence belongs to the major facilitator superfamily. Phthalate permease family.

Its subcellular location is the cell inner membrane. The enzyme catalyses galactarate(in) + H(+)(in) = galactarate(out) + H(+)(out). It catalyses the reaction D-glucarate(in) + H(+)(in) = D-glucarate(out) + H(+)(out). In terms of biological role, probably involved in the uptake of galactarate and/or D-glucarate. The chain is Probable galactarate/D-glucarate transporter GudP (gudP) from Pseudomonas putida (Arthrobacter siderocapsulatus).